The primary structure comprises 72 residues: Disintegrin cotiarin (72 aa).

The Disintegrin domain maps to 1–72 (EAGEECDCGA…SADCPRNRFH (72 aa)). 6 disulfides stabilise this stretch: Cys6-Cys21, Cys8-Cys16, Cys15-Cys38, Cys29-Cys35, Cys34-Cys59, and Cys47-Cys66. The Cell attachment site motif lies at 51 to 53 (RGD). The disordered stretch occupies residues 51 to 72 (RGDNPDDRCTGQSADCPRNRFH).

It belongs to the venom metalloproteinase (M12B) family. P-II subfamily. P-IIa sub-subfamily. Monomer. In terms of tissue distribution, expressed by the venom gland.

The protein resides in the secreted. Functionally, inhibits fibrinogen interaction with platelets. Acts by binding to alpha-IIb/beta-3 (ITGA2B/ITGB3) on the platelet surface and inhibits aggregation induced by ADP, thrombin, platelet-activating factor and collagen. The sequence is that of Disintegrin cotiarin from Bothrops cotiara (Cotiara).